Here is an 875-residue protein sequence, read N- to C-terminus: Metal transporter CNNM2 (875 aa).

The Extracellular segment spans residues 1 to 250 (MIGCGACEPE…TKMIVGEEKK (250 aa)). Asn-112 carries an N-linked (GlcNAc...) asparagine glycan. Positions 122 to 148 (EHERRRHTPGERGLGGPAPPEPDSGPQ) are disordered. The chain crosses the membrane as a helical span at residues 251–271 (FLLPFWLQVIFISLLLCLSGM). The CNNM transmembrane domain occupies 251–431 (FLLPFWLQVI…DPYNDLVKEE (181 aa)). Residues 272–313 (FSGLNLGLMALDPMELRIVQNCGTEKEKNYAKRIEPVRRQGN) are Cytoplasmic-facing. The segment at residues 314–334 (YLLCSLLLGNVLVNTTLTILL) is an intramembrane region (helical). At 335-338 (DDIA) the chain is on the cytoplasmic side. The helical transmembrane segment at 339 to 359 (GSGLVAVVVSTIGIVIFGEIV) threads the bilayer. At 360–368 (PQAICSRHG) the chain is on the extracellular side. Residues 369 to 389 (LAVGANTIFLTKFFMMMTFPA) traverse the membrane as a helical segment. Residues 390–875 (SYPVSKLLDC…NHSLHSEGAI (486 aa)) lie on the Cytoplasmic side of the membrane. CBS domains lie at 450–511 (MTPL…CTPL) and 518–584 (YNHP…ILDE). Positions 741-763 (AGSPGENKSPPRPCGLNHSDSLS) are disordered. The residue at position 761 (Ser-761) is a Phosphoserine.

Belongs to the ACDP family.

The protein localises to the cell membrane. Its function is as follows. Divalent metal cation transporter. Mediates transport of divalent metal cations in an order of Mg(2+) &gt; Co(2+) &gt; Mn(2+) &gt; Sr(2+) &gt; Ba(2+) &gt; Cu(2+) &gt; Fe(2+). The polypeptide is Metal transporter CNNM2 (Cnnm2) (Rattus norvegicus (Rat)).